We begin with the raw amino-acid sequence, 219 residues long: MNFNLIDINHWSRKPYFEHYLNNVKCTYSMTANIEITDLLYEIKLKNIKFYPTLIYMIATVVNNHKEFRICFDHKGSLGYWDSMNPSYTIFHKENETFSSIWTEYNKSFLRFYSDYLDDIKNYGNIMKFTPKSNEPDNTFSVSSIPWVSFTGFNLNVYNEGTYLIPIFTAGKYFKQENKIFIPISIQVHHAICDGYHASRFINEMQELAFSFQEWLENK.

His-190 (proton acceptor) is an active-site residue.

This sequence belongs to the chloramphenicol acetyltransferase family. Homotrimer.

It catalyses the reaction chloramphenicol + acetyl-CoA = chloramphenicol 3-acetate + CoA. Functionally, this enzyme is an effector of chloramphenicol resistance in bacteria. This chain is Chloramphenicol acetyltransferase (catB), found in Clostridium butyricum.